The primary structure comprises 694 residues: Scarecrow-like protein 33 (694 aa).

Residues 289 to 313 (PAKASTFSKSPKGEKPEASGNSYTK) form a disordered region. Residues 309-692 (NSYTKETPDL…RIVYGSSIWV (384 aa)) form the GRAS domain. Residues 316–376 (PDLRTMLVSC…EARLAGIGTQ (61 aa)) are leucine repeat I (LRI). The tract at residues 395–462 (YQTYISVCPF…GSSCKLRITG (68 aa)) is VHIID. Positions 428 to 432 (IHIID) match the VHIID motif. Residues 478-510 (ETGRRLAKYCQKFNIPFEYNAIAQKWESIKLED) are leucine repeat II (LRII). The tract at residues 519-613 (VAVNSLFRFR…KEFYGREIMN (95 aa)) is PFYRE. Positions 616–692 (ACEGTERVER…RIVYGSSIWV (77 aa)) are SAW.

Belongs to the GRAS family. In terms of assembly, interacts with SNRNP35.

The protein resides in the nucleus. Functionally, probable transcription factor involved in plant development. This chain is Scarecrow-like protein 33 (SCL33), found in Arabidopsis thaliana (Mouse-ear cress).